The primary structure comprises 1163 residues: MAQLANIGELLSMLDSSTLGVRDDVTTIFKESLNSERGPMLVNTLVDYYLETNSQPVLHILTTLQEPHDKHLLDKMNEYVGKAATRLSILSLLGHVVRLQPSWKHKLSQAPLLPSLLKCLKMDTDVVVLTTGVLVLITMLPMIPQSGKQHLLDFFDIFGRLSSWCLKKPGHVTEVYLVHLHASVYALFHRLYGMYPCNFVSFLRSHYSMKENVETFEEVVKPMMEHVRIHPELVTGSKDHELDPRRWKTLETHDVVIECAKISLDPTEASYEDGDAVSHQLSACFPHRSADVTTSSYVDTQNSYGGATSTPSSTSRLMLFSTPGQLPQSLSSLSTRPLPEPLQASLWSPSAVCGMTTPPTSPGNVPADLSHPYSKAFGTTTGGKGTPSGTPATSPPPAPPCPQDDCAHGPASQASATPPRKEERADSSRPYLPRQQDVPSDRGLEDLPGSKGSVTLRNLPDFLGDLASEEDSIEKDKEEAAISKELSEITTAEADPVAPRGGFDSPFYRDSLSGSQRKTHSAASGTQGFSVNPEPLHSSLDKHGPDTPKQAFTPIDPPSGSADASPAGDRDRQTSLETSILTPSPCKIPPQRGVSFGSGQLPPYDHLFEVALPKTACHFVSKKTEELLKKAKGNPEEDCVPSTSPMEVLDRLLEQGAGAHSKELSRLSLPSKSVDWTHFGGSPPSDEIRTLRDQLLLLHNQLLYERFKRQQHALRNRRLLRKVIRAAALEEHNAAMKDQLKLQEKDIQMWKVSLQKEQARYSQLQQQRDTMVTQLHSQIRQLQHDREEFYNQSQELQTKLEDCRSMIAELRVELKKANSKVCHTELLLSQVSQKLSNSESVQQQMEFLNRQLLVLGEVNELYLEQLQSKHPDTTKEVEMMKTAYRKELEKNRSHLLQQNQRLDASQRRVLELESLLAKKDHLLLEQKKYLEDVKSQASGQLLAAESRYEAQRKITRVLELEILDLYGRLEKDGRLQKLEEDRAEAAEAAEERLDCCTDGCSDSLLGHNEEAAGHNGETRTSRPGGTRASCGGRVTGGSSSSSSELSTPEKPPNQRFSSRWEPTMGEPSSSIPTTVGSLPSSKSFLGMKTRELFRNKSESQCDEDGMTMSSFSETLKTELGKDSAGMENKTPPSLDAPHPSSPSSDSMGQLHIMDYNETHHEHS.

Lys30 is covalently cross-linked (Glycyl lysine isopeptide (Lys-Gly) (interchain with G-Cter in ubiquitin)). Residues 295–316 (SSYVDTQNSYGGATSTPSSTSR) are compositionally biased toward polar residues. Disordered regions lie at residues 295–337 (SSYV…STRP) and 353–594 (CGMT…QRGV). Positions 321 to 337 (STPGQLPQSLSSLSTRP) are enriched in low complexity. A compositionally biased stretch (pro residues) spans 393–402 (TSPPPAPPCP). A mediates interaction with WDR45B region spans residues 403–787 (QDDCAHGPAS…QIRQLQHDRE (385 aa)). Over residues 474–487 (EKDKEEAAISKELS) the composition is skewed to basic and acidic residues. Phosphoserine is present on residues Ser487, Ser505, Ser511, Ser521, Ser595, and Ser598. Polar residues predominate over residues 512-530 (LSGSQRKTHSAASGTQGFS). Coiled-coil stretches lie at residues 721-919 (RKVI…LAKK) and 970-994 (EKDGRLQKLEEDRAEAAEAAEERLD). Residues 1008–1020 (NEEAAGHNGETRT) show a composition bias toward basic and acidic residues. Positions 1008–1163 (NEEAAGHNGE…DYNETHHEHS (156 aa)) are disordered. Over residues 1029–1046 (SCGGRVTGGSSSSSSELS) the composition is skewed to low complexity. The span at 1066–1083 (EPSSSIPTTVGSLPSSKS) shows a compositional bias: polar residues. Residues 1088–1099 (KTRELFRNKSES) are compositionally biased toward basic and acidic residues. Residue Ser1097 is modified to Phosphoserine. Low complexity predominate over residues 1131–1146 (PPSLDAPHPSSPSSDS). Positions 1154 to 1163 (DYNETHHEHS) are enriched in basic and acidic residues.

As to quaternary structure, component of the TSC-TBC complex (also named Rhebulator complex), composed of 2 molecules of TSC1, 2 molecules of TSC2 and 1 molecule of TBC1D7. Probably forms a complex composed of chaperones HSP90 and HSP70, co-chaperones STIP1/HOP, CDC37, PPP5C, PTGES3/p23, TSC1 and client protein TSC2. Forms a complex composed of chaperones HSP90 and HSP70, co-chaperones CDC37, PPP5C, TSC1 and client protein TSC2, CDK4, AKT, RAF1 and NR3C1; this complex does not contain co-chaperones STIP1/HOP and PTGES3/p23. Forms a complex containing HSP90AA1, TSC1 and TSC2; TSC1 is required to recruit TCS2 to the complex. Interacts (via C-terminus) with the closed form of HSP90AA1 (via the middle domain and TPR repeat-binding motif). Interacts with DOCK7. Interacts with FBXW5. Interacts with WDR45B. Interacts with RPAP3 and URI1. In terms of processing, phosphorylation at Ser-505 does not affect interaction with TSC2. Post-translationally, 'Lys-63'-linked ubiquitinated at Lys-30 by PELI1; the ubiquitination promotes TSC1/TSC2 complex stability. As to expression, highly expressed in brain, spleen and kidney, followed by liver and heart.

The protein resides in the lysosome membrane. Its subcellular location is the cytoplasm. The protein localises to the cytosol. Non-catalytic component of the TSC-TBC complex, a multiprotein complex that acts as a negative regulator of the canonical mTORC1 complex, an evolutionarily conserved central nutrient sensor that stimulates anabolic reactions and macromolecule biosynthesis to promote cellular biomass generation and growth. The TSC-TBC complex acts as a GTPase-activating protein (GAP) for the small GTPase RHEB, a direct activator of the protein kinase activity of mTORC1. In absence of nutrients, the TSC-TBC complex inhibits mTORC1, thereby preventing phosphorylation of ribosomal protein S6 kinase (RPS6KB1 and RPS6KB2) and EIF4EBP1 (4E-BP1) by the mTORC1 signaling. The TSC-TBC complex is inactivated in response to nutrients, relieving inhibition of mTORC1. Within the TSC-TBC complex, TSC1 stabilizes TSC2 and prevents TSC2 self-aggregation. Involved in microtubule-mediated protein transport via its ability to regulate mTORC1 signaling. Also acts as a co-chaperone for HSP90AA1 facilitating HSP90AA1 chaperoning of protein clients such as kinases, TSC2 and glucocorticoid receptor NR3C1. Increases ATP binding to HSP90AA1 and inhibits HSP90AA1 ATPase activity. Competes with the activating co-chaperone AHSA1 for binding to HSP90AA1, thereby providing a reciprocal regulatory mechanism for chaperoning of client proteins. Recruits TSC2 to HSP90AA1 and stabilizes TSC2 by preventing the interaction between TSC2 and ubiquitin ligase HERC1. This Rattus norvegicus (Rat) protein is Hamartin.